The sequence spans 131 residues: UPF0344 protein Sca_0577 (131 aa).

4 helical membrane passes run 1–21, 42–62, 69–89, and 99–119; these read MLHL…VSYI, LFLV…FATA, LLTL…VTLV, and GLFW…IILP.

The protein belongs to the UPF0344 family.

Its subcellular location is the cell membrane. The chain is UPF0344 protein Sca_0577 from Staphylococcus carnosus (strain TM300).